Reading from the N-terminus, the 99-residue chain is UPF0235 protein Sbal223_1335 (99 aa).

It belongs to the UPF0235 family.

This is UPF0235 protein Sbal223_1335 from Shewanella baltica (strain OS223).